The primary structure comprises 292 residues: MFDDQDEIHPLLAGAPQTTEFRKLRKRIVREVREAIETYGMVERGARWLVCLSGGKDSYTLLAVLHELKWRGLLPVDLLACNLDQGQPGFPATVLPEFLSRMGVPHRIEYQDTYSIVMDKIPQGRTYCALCSRLRRGNLYRIAREEGCSAVVLGHHRDDILETFFMNLFHGGRLATMPPKLVNEDGDLFVYRPLAFVAEADCEKFARDMAYPIIPCDLCGSQEGLQRQQVKQILDGWEARSPGRRQVMFRALMNARPSHLLDPGLFDFLGLATAPRASEERQDEPPHLRGEA.

Positions 53-58 (SGGKDS) match the PP-loop motif motif. [4Fe-4S] cluster contacts are provided by Cys128, Cys131, and Cys219.

The protein belongs to the TtcA family. As to quaternary structure, homodimer. The cofactor is Mg(2+). [4Fe-4S] cluster is required as a cofactor.

It localises to the cytoplasm. The catalysed reaction is cytidine(32) in tRNA + S-sulfanyl-L-cysteinyl-[cysteine desulfurase] + AH2 + ATP = 2-thiocytidine(32) in tRNA + L-cysteinyl-[cysteine desulfurase] + A + AMP + diphosphate + H(+). It participates in tRNA modification. Its function is as follows. Catalyzes the ATP-dependent 2-thiolation of cytidine in position 32 of tRNA, to form 2-thiocytidine (s(2)C32). The sulfur atoms are provided by the cysteine/cysteine desulfurase (IscS) system. This Cereibacter sphaeroides (strain ATCC 17023 / DSM 158 / JCM 6121 / CCUG 31486 / LMG 2827 / NBRC 12203 / NCIMB 8253 / ATH 2.4.1.) (Rhodobacter sphaeroides) protein is tRNA-cytidine(32) 2-sulfurtransferase.